Consider the following 331-residue polypeptide: Probable allantoicase (331 aa).

The protein belongs to the allantoicase family.

The catalysed reaction is allantoate + H2O = (S)-ureidoglycolate + urea. Its pathway is nitrogen metabolism; (S)-allantoin degradation; (S)-ureidoglycolate from allantoate (aminidohydrolase route): step 1/1. The protein is Probable allantoicase of Pseudomonas fluorescens (strain Pf0-1).